A 318-amino-acid chain; its full sequence is Transaldolase (318 aa).

The active-site Schiff-base intermediate with substrate is K132.

It belongs to the transaldolase family. Type 1 subfamily. As to quaternary structure, homodimer.

The protein localises to the cytoplasm. The catalysed reaction is D-sedoheptulose 7-phosphate + D-glyceraldehyde 3-phosphate = D-erythrose 4-phosphate + beta-D-fructose 6-phosphate. The protein operates within carbohydrate degradation; pentose phosphate pathway; D-glyceraldehyde 3-phosphate and beta-D-fructose 6-phosphate from D-ribose 5-phosphate and D-xylulose 5-phosphate (non-oxidative stage): step 2/3. Its function is as follows. Transaldolase is important for the balance of metabolites in the pentose-phosphate pathway. In Shewanella sediminis (strain HAW-EB3), this protein is Transaldolase.